The primary structure comprises 393 residues: MKQLKPNSKYLLFGQALSFMGDYCVLPALLILSTYYHDYWVTSGVIAVRSIPMVFQPFLGVLVDRLDRVKIMLWTDVIRGVIFLGLTFLPKGEYPLLFLALLFVSYGSGVFFNPARLAVMSSLEADIKNINTLFAKATTISIIVGAAAGGLFLLGGSVELAVAFNGVTYLVSAFFISRIKLQYVPIQSENVREAFQSFKEGLKEIKTNAFVLNAMFTMITMALLWGVVYSYFPIVSRFLGDGEIGNFLLTFCIGFGGFIGAALVSKWGFNNNKGLMYFTVLSIVSLALFLFTPIFAVSVIAAILFFIAMEYGEVLAKVKVQENAANQIQGRIFSVAEASIGLCIAVGSMLINIVDAAVIMAFIVLLVSGLFLHTKLVNKSFSERNNESEQIHL.

10 helical membrane passes run 11–31 (LLFGQALSFMGDYCVLPALLI), 43–63 (SGVIAVRSIPMVFQPFLGVLV), 69–89 (VKIMLWTDVIRGVIFLGLTFL), 92–112 (GEYPLLFLALLFVSYGSGVFF), 133–155 (LFAKATTISIIVGAAAGGLFLLG), 160–177 (LAVAFNGVTYLVSAFFIS), 215–235 (MFTMITMALLWGVVYSYFPIV), 244–264 (IGNFLLTFCIGFGGFIGAALV), 287–307 (ALFLFTPIFAVSVIAAILFFI), and 353–373 (IVDAAVIMAFIVLLVSGLFLH).

The protein belongs to the major facilitator superfamily.

It is found in the cell membrane. Part of the bacilysin biosynthesis operon. May be involved in self-resistance to bacilysin by permitting efflux of this antibiotic. This is Putative bacilysin exporter BacE (bacE) from Bacillus amyloliquefaciens (Bacillus velezensis).